Here is a 304-residue protein sequence, read N- to C-terminus: Acetylxylan esterase A (304 aa).

An N-terminal signal peptide occupies residues 1–24 (MLLSTHLLFVITTLVTSLLHPIDG). Catalysis depends on serine 148, which acts as the Charge relay system. N-linked (GlcNAc...) asparagine glycosylation is present at asparagine 190.

The protein belongs to the carbohydrate esterase 1 (CE1) family. AxeA subfamily. Monomer.

Its subcellular location is the secreted. It catalyses the reaction Deacetylation of xylans and xylo-oligosaccharides.. It participates in glycan degradation; xylan degradation. With respect to regulation, inactivated by di-isopropylfluorophosphate and phenylmethylsulfonylfluorid (PMSF), a specific inhibitor of serine esterases. In terms of biological role, acetylxylan esterase involved in the hydrolysis of xylan, a major structural heterogeneous polysaccharide found in plant biomass representing the second most abundant polysaccharide in the biosphere, after cellulose. Degrades acetylated xylans by cleaving acetyl side groups from the hetero-xylan backbone. This chain is Acetylxylan esterase A (axeA), found in Aspergillus awamori (Black koji mold).